The following is a 336-amino-acid chain: HTH-type transcriptional repressor PurR (336 aa).

Positions 2 to 56 (ATIKDVARLAGVSTTTVSHVINKTRFVAETTQEKVMEAVKQLNYAPSAVARSLKC) constitute an HTH lacI-type domain. A DNA-binding region (H-T-H motif) is located at residues 4–23 (IKDVARLAGVSTTTVSHVIN). Residues 48-56 (SAVARSLKC) mediate DNA binding. Hypoxanthine contacts are provided by F73, K189, F220, and D274.

Homodimer.

The protein operates within purine metabolism; purine nucleotide biosynthesis [regulation]. In terms of biological role, is the main repressor of the genes involved in the de novo synthesis of purine nucleotides, regulating purB, purC, purEK, purF, purHD, purL, purMN and guaBA expression. PurR is allosterically activated to bind its cognate DNA by binding the purine corepressors, hypoxanthine or guanine, thereby effecting transcription repression. This Vibrio cholerae serotype O1 (strain ATCC 39315 / El Tor Inaba N16961) protein is HTH-type transcriptional repressor PurR.